Reading from the N-terminus, the 433-residue chain is Adenylosuccinate synthetase (433 aa).

GTP-binding positions include 18 to 24 (GDEGKGK) and 46 to 48 (GHT). The Proton acceptor role is filled by aspartate 19. The Mg(2+) site is built by aspartate 19 and glycine 46. IMP-binding positions include 19–22 (DEGK), 44–47 (NAGH), threonine 136, arginine 150, glutamine 229, threonine 244, and arginine 308. The Proton donor role is filled by histidine 47. Substrate is bound at residue 304–310 (VTTKRMR). GTP is bound by residues arginine 310, 336–338 (KID), and 420–422 (GTG).

The protein belongs to the adenylosuccinate synthetase family. As to quaternary structure, homodimer. Mg(2+) serves as cofactor.

It localises to the cytoplasm. The catalysed reaction is IMP + L-aspartate + GTP = N(6)-(1,2-dicarboxyethyl)-AMP + GDP + phosphate + 2 H(+). The protein operates within purine metabolism; AMP biosynthesis via de novo pathway; AMP from IMP: step 1/2. Functionally, plays an important role in the de novo pathway and in the salvage pathway of purine nucleotide biosynthesis. Catalyzes the first committed step in the biosynthesis of AMP from IMP. The protein is Adenylosuccinate synthetase of Schistosoma japonicum (Blood fluke).